The primary structure comprises 264 residues: Endonuclease V (264 aa).

Asp-72 and Asp-137 together coordinate Mg(2+).

This sequence belongs to the endonuclease V family. It depends on Mg(2+) as a cofactor.

The protein localises to the cytoplasm. The enzyme catalyses Endonucleolytic cleavage at apurinic or apyrimidinic sites to products with a 5'-phosphate.. Functionally, DNA repair enzyme involved in the repair of deaminated bases. Selectively cleaves double-stranded DNA at the second phosphodiester bond 3' to a deoxyinosine leaving behind the intact lesion on the nicked DNA. The polypeptide is Endonuclease V (Halobacterium salinarum (strain ATCC 700922 / JCM 11081 / NRC-1) (Halobacterium halobium)).